A 403-amino-acid chain; its full sequence is Presqualene diphosphate synthase (403 aa).

D84, E87, and D88 together coordinate Mg(2+).

It belongs to the phytoene/squalene synthase family. Requires Mg(2+) as cofactor.

The enzyme catalyses 2 (2E,6E)-farnesyl diphosphate = presqualene diphosphate + diphosphate. In terms of biological role, catalyzes the biosynthesis of presqualene diphosphate (PSPP). Works in combination with SSL-2 or SSL-3 to produce respectively squalene or botryococcene. In most other species, farnesyl diphosphate (FPP) is converted into squalene in a two-step reaction by a single enzyme. In Botryococcus braunii (Green alga), this protein is Presqualene diphosphate synthase (SSL-1).